The following is a 391-amino-acid chain: 3-ketoacyl-CoA thiolase (391 aa).

Residue Cys95 is the Acyl-thioester intermediate of the active site. Catalysis depends on proton acceptor residues His347 and Cys377.

The protein belongs to the thiolase-like superfamily. Thiolase family. In terms of assembly, heterotetramer of two alpha chains (FadB) and two beta chains (FadA).

The protein localises to the cytoplasm. The enzyme catalyses an acyl-CoA + acetyl-CoA = a 3-oxoacyl-CoA + CoA. Its pathway is lipid metabolism; fatty acid beta-oxidation. Catalyzes the final step of fatty acid oxidation in which acetyl-CoA is released and the CoA ester of a fatty acid two carbons shorter is formed. The protein is 3-ketoacyl-CoA thiolase of Marinomonas sp. (strain MWYL1).